We begin with the raw amino-acid sequence, 308 residues long: MISRFFRHLFEALKSLKRNGWMTVAAVSSVMITLTLVAIFASVIFNTAKLATDIENNVRVVVYIRKDVEDNSQTIEKEGQTVTNNDYHKVYDSLKNMSTVKSVTFSSKEEQYEKLTEIMGDNWKIFEGDANPLYDAYIVEANAPNDVKTIAEDAKKIEGVSEVQDGGANTERLFKLASFIRVWGLGIAALLIFIAAFLISNTIRITIISRSREIQIMRLVGAKNSYIRGPFLLEGAFIGLLGAIAPSVLVFIVYQIVYQSVNKSLVGQNLSMISPDLFSPLMIALLFVIGVFIGSLGSGISMRRFLKI.

The Extracellular portion of the chain corresponds to 1 to 24 (MISRFFRHLFEALKSLKRNGWMTV). A helical membrane pass occupies residues 25–45 (AAVSSVMITLTLVAIFASVIF). Over 46-178 (NTAKLATDIE…NTERLFKLAS (133 aa)) the chain is Cytoplasmic. The helical transmembrane segment at 179 to 199 (FIRVWGLGIAALLIFIAAFLI) threads the bilayer. At 200 to 236 (SNTIRITIISRSREIQIMRLVGAKNSYIRGPFLLEGA) the chain is on the extracellular side. Residues 237 to 257 (FIGLLGAIAPSVLVFIVYQIV) form a helical membrane-spanning segment. At 258–276 (YQSVNKSLVGQNLSMISPD) the chain is on the cytoplasmic side. A helical membrane pass occupies residues 277–297 (LFSPLMIALLFVIGVFIGSLG). Over 298–308 (SGISMRRFLKI) the chain is Extracellular.

Belongs to the ABC-4 integral membrane protein family. FtsX subfamily. Interacts with FtsE. Interacts (via large extracellular loop) with PcsB (via N-terminal coiled coil domain). This interaction directs PcsB to equatorial and septal sites of dividing cells.

The protein resides in the cell membrane. Part of the ABC transporter FtsEX involved in asymmetric cellular division facilitating the initiation of sporulation. Required in maintaining normal growth and cellular morphology. The polypeptide is Cell division protein FtsX (Streptococcus pneumoniae (strain ATCC BAA-255 / R6)).